A 288-amino-acid chain; its full sequence is Probable aquaporin PIP2-2 (288 aa).

Residues 1–21 form a disordered region; that stretch reads MAKDIEASAPEGGEFSAKDYT. 2 helical membrane-spanning segments follow: residues 42–62 and 81–101; these read AVIAEFIATLLFLYITVATVI and GVGILGIAWAFGGMIFILVYC. The NPA 1 signature appears at 111 to 113; sequence NPA. 3 helical membrane-spanning segments follow: residues 130–150, 172–192, and 204–224; these read VLYIIAQCLGAICGVGLVKGF, GTGLGAEIIGTFVLVYTVFSA, and IPVLAPLPIGFAVFMVHLATI. Positions 232–234 match the NPA 2 motif; sequence NPA. Residues 254–274 form a helical membrane-spanning segment; the sequence is IFWVGPLIGAAIAAAYHQYVL.

This sequence belongs to the MIP/aquaporin (TC 1.A.8) family. PIP (TC 1.A.8.11) subfamily. As to expression, expressed in roots, leaves and anthers.

The protein resides in the cell membrane. Functionally, aquaporins facilitate the transport of water and small neutral solutes across cell membranes. This Oryza sativa subsp. japonica (Rice) protein is Probable aquaporin PIP2-2 (PIP2-2).